Here is a 190-residue protein sequence, read N- to C-terminus: Elongation factor P-like protein (190 aa).

This sequence belongs to the elongation factor P family.

The polypeptide is Elongation factor P-like protein (Pectobacterium carotovorum subsp. carotovorum (strain PC1)).